We begin with the raw amino-acid sequence, 434 residues long: 3-phosphoshikimate 1-carboxyvinyltransferase (434 aa).

The 3-phosphoshikimate site is built by lysine 15, serine 16, and arginine 20. Lysine 15 provides a ligand contact to phosphoenolpyruvate. Positions 96 and 124 each coordinate phosphoenolpyruvate. 3-phosphoshikimate is bound by residues serine 169, glutamine 171, serine 195, aspartate 319, and lysine 346. Glutamine 171 contributes to the phosphoenolpyruvate binding site. The active-site Proton acceptor is the aspartate 319. 2 residues coordinate phosphoenolpyruvate: arginine 350 and arginine 394.

It belongs to the EPSP synthase family. As to quaternary structure, monomer.

Its subcellular location is the cytoplasm. The enzyme catalyses 3-phosphoshikimate + phosphoenolpyruvate = 5-O-(1-carboxyvinyl)-3-phosphoshikimate + phosphate. It functions in the pathway metabolic intermediate biosynthesis; chorismate biosynthesis; chorismate from D-erythrose 4-phosphate and phosphoenolpyruvate: step 6/7. In terms of biological role, catalyzes the transfer of the enolpyruvyl moiety of phosphoenolpyruvate (PEP) to the 5-hydroxyl of shikimate-3-phosphate (S3P) to produce enolpyruvyl shikimate-3-phosphate and inorganic phosphate. The protein is 3-phosphoshikimate 1-carboxyvinyltransferase of Chlorobium phaeobacteroides (strain DSM 266 / SMG 266 / 2430).